A 223-amino-acid polypeptide reads, in one-letter code: MQQSPQMIPMVLPSFPPTNNITTEQIQKYLDENKKLIMAILENQNLGKLAECAQYQALLQKNLMYLAAIADAQPQPPAATLTSGAMTPQAMAPNPSSMQPPPSYFMQQHQAVGMAQQIPPGIFPPRGPLQFGSPHQFLDPQQQLHQQAMQGHMGIRPMGLNNNNGLQHQMHHHETALAANNAGPNDASGGGKPDGTNMSQSGADGQGGSAARHGGGDAKTEGK.

Residues 179–223 (ANNAGPNDASGGGKPDGTNMSQSGADGQGGSAARHGGGDAKTEGK) form a disordered region. Residues 214–223 (GGGDAKTEGK) show a composition bias toward basic and acidic residues.

This sequence belongs to the SS18 family. In terms of assembly, interacts with GRF1. In terms of tissue distribution, predominantly expressed in shoot tips containing the shoot apical meristem (SAM) and flower buds. Also expressed in mature flowers.

In terms of biological role, transcription coactivator that plays a role in the regulation of cell expansion in leaf and cotyledons tissues. Component of a network formed by miR396, the GRFs and their interacting factors (GIFs) acting in the regulation of meristem function, at least partially through the control of cell proliferation. GIFs are involved in the positive regulation of cell proliferation of lateral organs in a functionally redundant manner. The chain is GRF1-interacting factor 3 (GIF3) from Arabidopsis thaliana (Mouse-ear cress).